The following is a 649-amino-acid chain: L-ornithine N(5)-monooxygenase (649 aa).

Residues 72–80 (EKRGHFAWH) and Q91 contribute to the FAD site. K96 lines the substrate pocket. Position 157 (V157) interacts with FAD. NADP(+) is bound by residues 289–292 (AGQS) and R314. Substrate-binding positions include 328–331 (NSAA) and N359. 359–361 (NYS) lines the NADP(+) pocket. Residues 512–547 (AMQSDAVRSGKSSPGSGSDASSTSSQQTLASENSTE) are disordered. Low complexity predominate over residues 520 to 536 (SGKSSPGSGSDASSTSS). Residues 537–547 (QQTLASENSTE) show a composition bias toward polar residues. Residue 569–571 (SLL) participates in FAD binding. S572 is a substrate binding site. The tract at residues 585-611 (LLQRLPRTRRGTASSAATQPAASTVAS) is disordered. Residues 596–611 (TASSAATQPAASTVAS) are compositionally biased toward low complexity.

Belongs to the lysine N(6)-hydroxylase/L-ornithine N(5)-oxygenase family. In terms of assembly, homotetramer. FAD serves as cofactor.

The catalysed reaction is L-ornithine + NADPH + O2 = N(5)-hydroxy-L-ornithine + NADP(+) + H2O. It carries out the reaction L-ornithine + NADH + O2 = N(5)-hydroxy-L-ornithine + NAD(+) + H2O. The protein operates within siderophore biosynthesis; ferrichrome biosynthesis. Its function is as follows. Catalyzes the conversion of L-ornithine to N(5)-hydroxyornithine, the first step in the biosynthesis of all hydroxamate-containing siderophores, such as ferrichrome. This Mycosarcoma maydis (Corn smut fungus) protein is L-ornithine N(5)-monooxygenase (SID1).